The primary structure comprises 348 residues: Fe(3+) ions import ATP-binding protein FbpC (348 aa).

Residues 7-237 (VELRNVTKRF…PASRFMASFM (231 aa)) form the ABC transporter domain. 39–46 (GPSGCGKT) is a binding site for ATP.

It belongs to the ABC transporter superfamily. Fe(3+) ion importer (TC 3.A.1.10) family. As to quaternary structure, the complex is composed of two ATP-binding proteins (FbpC), two transmembrane proteins (FbpB) and a solute-binding protein (FbpA).

Its subcellular location is the cell inner membrane. It catalyses the reaction Fe(3+)(out) + ATP + H2O = Fe(3+)(in) + ADP + phosphate + H(+). Functionally, part of the ABC transporter complex FbpABC involved in Fe(3+) ions import. Responsible for energy coupling to the transport system. This is Fe(3+) ions import ATP-binding protein FbpC from Escherichia coli O157:H7.